Reading from the N-terminus, the 447-residue chain is Rab GDP dissociation inhibitor alpha (447 aa).

Position 427 is a phosphoserine (serine 427).

Belongs to the Rab GDI family. As to quaternary structure, interacts with RHOH. Interacts with the non-phosphorylated forms of RAB1A, RAB3A, RAB5A, RAB5B, RAB5C, RAB8A, RAB8B, RAB10, RAB12, RAB35, and RAB43. Interacts with RAB3A.

It is found in the cytoplasm. Its subcellular location is the golgi apparatus. The protein resides in the trans-Golgi network. Regulates the GDP/GTP exchange reaction of most Rab proteins by inhibiting the dissociation of GDP from them, and the subsequent binding of GTP to them. Promotes the dissociation of GDP-bound Rab proteins from the membrane and inhibits their activation. Promotes the dissociation of RAB1A, RAB3A, RAB5A and RAB10 from membranes. The chain is Rab GDP dissociation inhibitor alpha (GDI1) from Bos taurus (Bovine).